Here is a 125-residue protein sequence, read N- to C-terminus: 14 kDa phosphohistidine phosphatase (125 aa).

Ala2 is subject to N-acetylalanine. Lys21 is a substrate binding site. His53 functions as the Proton acceptor in the catalytic mechanism. Substrate is bound at residue 94-96; the sequence is SMA.

It belongs to the janus family. In terms of assembly, monomer. Expressed abundantly in heart and skeletal muscle.

Its subcellular location is the cytoplasm. It carries out the reaction N(pros)-phospho-L-histidyl-[protein] + H2O = L-histidyl-[protein] + phosphate. The enzyme catalyses N(tele)-phospho-L-histidyl-[protein] + H2O = L-histidyl-[protein] + phosphate. Functionally, exhibits phosphohistidine phosphatase activity. This Homo sapiens (Human) protein is 14 kDa phosphohistidine phosphatase (PHPT1).